The following is a 674-amino-acid chain: Methionine--tRNA ligase (674 aa).

A 'HIGH' region motif is present at residues Pro-11–His-21. Zn(2+)-binding residues include Cys-142, Cys-145, Cys-155, and Cys-158. The 'KMSKS' region signature appears at Lys-330–Ser-334. Lys-333 serves as a coordination point for ATP. Residues Asp-574–Lys-674 enclose the tRNA-binding domain.

The protein belongs to the class-I aminoacyl-tRNA synthetase family. MetG type 1 subfamily. In terms of assembly, homodimer. The cofactor is Zn(2+).

It localises to the cytoplasm. It carries out the reaction tRNA(Met) + L-methionine + ATP = L-methionyl-tRNA(Met) + AMP + diphosphate. Its function is as follows. Is required not only for elongation of protein synthesis but also for the initiation of all mRNA translation through initiator tRNA(fMet) aminoacylation. The protein is Methionine--tRNA ligase of Francisella tularensis subsp. holarctica (strain OSU18).